The primary structure comprises 137 residues: Large ribosomal subunit protein uL16c (137 aa).

The protein belongs to the universal ribosomal protein uL16 family. Part of the 50S ribosomal subunit.

The protein localises to the plastid. The protein is Large ribosomal subunit protein uL16c of Cuscuta reflexa (Southern Asian dodder).